Reading from the N-terminus, the 175-residue chain is Inorganic pyrophosphatase (175 aa).

Positions 30, 44, and 56 each coordinate substrate. Positions 66, 71, and 103 each coordinate Mg(2+). Position 140 (Tyr140) interacts with substrate.

The protein belongs to the PPase family. Homohexamer. The cofactor is Mg(2+).

It is found in the cytoplasm. It catalyses the reaction diphosphate + H2O = 2 phosphate + H(+). Its function is as follows. Catalyzes the hydrolysis of inorganic pyrophosphate (PPi) forming two phosphate ions. This chain is Inorganic pyrophosphatase, found in Thermus thermophilus (strain ATCC 27634 / DSM 579 / HB8).